An 835-amino-acid chain; its full sequence is Replication origin-binding protein (835 aa).

The Helicase ATP-binding domain occupies 54 to 215 (PGMSQTRPVT…SGLRGDENIH (162 aa)). 67–74 (APMGSGKT) contributes to the ATP binding site.

It belongs to the herpesviridae OriBP family. Homodimer. Interacts with the major DNA-binding protein. Interacts with the helicase/primase component 52 and the polymerase accessory protein.

Its subcellular location is the host nucleus. Functionally, functions as a docking protein to recruit essential components of the viral replication machinery to viral DNA origins. In the presence of the major DNA-binding protein, opens dsDNA leading to a conformational change in the origin that facilitates DNA unwinding and subsequent replication. The sequence is that of Replication origin-binding protein from Varicella-zoster virus (strain Oka vaccine) (HHV-3).